Reading from the N-terminus, the 301-residue chain is MLKVTIELGIAPIGWTNDDMPELGKEVTFEQAIDEMTLAGYKGTEVGNKYPKDPKTLKHFLDLRHLKIASAWFSAFLTTKPYEETEAAFIKHRDFLHAMGAKVIVVAEQGHSVQGLLDKSVFDDKPHFTDDEWERLATGLERLGDRAREVGMQIVYHHHMGTGVQTTAEIDRLMTMTDPDKVSLLFDTGHLVLSGEDPLTIFNRYQDRIKHIHFKDVRQQQADEEHKDHLSFLAGVKNGMFTVPGDGMIDFKPIWEAIQESGYDGWIIVEAEQDPAKANPFEYALKAKKYLDATMNIPQSA.

It belongs to the IolE/MocC family. It depends on glutathione as a cofactor. The cofactor is Co(2+). Mn(2+) serves as cofactor.

The enzyme catalyses scyllo-inosose = 3D-3,5/4-trihydroxycyclohexane-1,2-dione + H2O. It participates in polyol metabolism; myo-inositol degradation into acetyl-CoA; acetyl-CoA from myo-inositol: step 2/7. Its function is as follows. Catalyzes the dehydration of inosose (2-keto-myo-inositol, 2KMI or 2,4,6/3,5-pentahydroxycyclohexanone) to 3D-(3,5/4)-trihydroxycyclohexane-1,2-dione (D-2,3-diketo-4-deoxy-epi-inositol). The chain is Inosose dehydratase from Lacticaseibacillus casei (strain BL23) (Lactobacillus casei).